The chain runs to 224 residues: Artemin (224 aa).

Residues 1 to 39 (MELGLAEPTALSHCLRPRWQSAWWPTLAVLALLSCVTEA) form the signal peptide. The propeptide occupies 40-111 (SLDPMSRSPA…AALRGARAAR (72 aa)). The disordered stretch occupies residues 43–124 (PMSRSPAARD…RSSRARTTDA (82 aa)). Over residues 80-95 (RPPPQSPQPAPPPPGP) the composition is skewed to pro residues. Residues 96–116 (ALQSPPAALRGARAARAGTRS) are compositionally biased toward low complexity. 3 disulfides stabilise this stretch: cysteine 127–cysteine 192, cysteine 154–cysteine 220, and cysteine 158–cysteine 222. N-linked (GlcNAc...) asparagine glycosylation occurs at asparagine 206.

Belongs to the TGF-beta family. GDNF subfamily. Homodimer; disulfide-linked. Interacts with GFRA3 coreceptor and RET: forms a 2:2:2 ternary complex composed of ARTN ligand, GFRA3 and RET receptor.

It is found in the secreted. Functionally, growth factor that supports the survival of sensory and sympathetic peripheral neurons in culture and also supports the survival of dopaminergic neurons of the ventral mid-brain. Acts by binding to its coreceptor, GFRA3, leading to autophosphorylation and activation of the RET receptor. Strong attractant of gut hematopoietic cells thus promoting the formation Peyer's patch-like structures, a major component of the gut-associated lymphoid tissue. The chain is Artemin from Mus musculus (Mouse).